We begin with the raw amino-acid sequence, 396 residues long: Elongation factor Tu (396 aa).

The tr-type G domain occupies 10–205 (KPHVNIGTIG…ACDDNIPDPV (196 aa)). Positions 19–26 (GHVDHGKT) are G1. 19–26 (GHVDHGKT) serves as a coordination point for GTP. Mg(2+) is bound at residue Thr-26. Residues 62-66 (GITIN) form a G2 region. The tract at residues 83 to 86 (DAPG) is G3. GTP contacts are provided by residues 83–87 (DAPGH) and 138–141 (NKCD). Residues 138-141 (NKCD) are G4. Residues 175–177 (SAL) are G5.

The protein belongs to the TRAFAC class translation factor GTPase superfamily. Classic translation factor GTPase family. EF-Tu/EF-1A subfamily. In terms of assembly, monomer.

Its subcellular location is the cytoplasm. It carries out the reaction GTP + H2O = GDP + phosphate + H(+). Its function is as follows. GTP hydrolase that promotes the GTP-dependent binding of aminoacyl-tRNA to the A-site of ribosomes during protein biosynthesis. The polypeptide is Elongation factor Tu (Corynebacterium glutamicum (strain ATCC 13032 / DSM 20300 / JCM 1318 / BCRC 11384 / CCUG 27702 / LMG 3730 / NBRC 12168 / NCIMB 10025 / NRRL B-2784 / 534)).